A 177-amino-acid chain; its full sequence is ATP synthase subunit delta (177 aa).

Belongs to the ATPase delta chain family. In terms of assembly, F-type ATPases have 2 components, F(1) - the catalytic core - and F(0) - the membrane proton channel. F(1) has five subunits: alpha(3), beta(3), gamma(1), delta(1), epsilon(1). F(0) has three main subunits: a(1), b(2) and c(10-14). The alpha and beta chains form an alternating ring which encloses part of the gamma chain. F(1) is attached to F(0) by a central stalk formed by the gamma and epsilon chains, while a peripheral stalk is formed by the delta and b chains.

The protein resides in the cell inner membrane. In terms of biological role, f(1)F(0) ATP synthase produces ATP from ADP in the presence of a proton or sodium gradient. F-type ATPases consist of two structural domains, F(1) containing the extramembraneous catalytic core and F(0) containing the membrane proton channel, linked together by a central stalk and a peripheral stalk. During catalysis, ATP synthesis in the catalytic domain of F(1) is coupled via a rotary mechanism of the central stalk subunits to proton translocation. Its function is as follows. This protein is part of the stalk that links CF(0) to CF(1). It either transmits conformational changes from CF(0) to CF(1) or is implicated in proton conduction. The protein is ATP synthase subunit delta of Proteus mirabilis (strain HI4320).